The chain runs to 64 residues: Large ribosomal subunit protein eL37 (64 aa).

Residues Cys-20, Cys-23, Cys-35, and Cys-38 each coordinate Zn(2+). A C4-type zinc finger spans residues 20-38 (CRRCGRRAFHVRKKVCAAC).

Belongs to the eukaryotic ribosomal protein eL37 family. Zn(2+) serves as cofactor.

Binds to the 23S rRNA. In Methanococcus maripaludis (strain C6 / ATCC BAA-1332), this protein is Large ribosomal subunit protein eL37.